The primary structure comprises 899 residues: Putative lipoxygenase 5 (899 aa).

Disordered stretches follow at residues 15 to 34, 48 to 68, and 258 to 291; these read AGSRGMGKGASRRRTARSTA, APVEQQRGAGRPEAHPQSVAA, and VASARPVLGGEQMPYPRRMRTGRPSTATDASAES. The region spanning 68 to 204 is the PLAT domain; sequence ARAVVTVRRR…VSRDRRVFFS (137 aa). The region spanning 207-899 is the Lipoxygenase domain; the sequence is PYLPSETPPG…CRGVPNSVTI (693 aa). Residues His-559, His-564, His-751, Asn-755, and Ile-899 each coordinate Fe cation.

Belongs to the lipoxygenase family. Requires Fe cation as cofactor.

It catalyses the reaction (9Z,12Z)-octadecadienoate + O2 = (13S)-hydroperoxy-(9Z,11E)-octadecadienoate. The catalysed reaction is (9Z,12Z,15Z)-octadecatrienoate + O2 = (13S)-hydroperoxy-(9Z,11E,15Z)-octadecatrienoate. Its pathway is lipid metabolism; oxylipin biosynthesis. Functionally, plant lipoxygenase may be involved in a number of diverse aspects of plant physiology including growth and development, pest resistance, and senescence or responses to wounding. Catalyzes the hydroperoxidation of lipids containing a cis,cis-1,4-pentadiene structure. The chain is Putative lipoxygenase 5 from Oryza sativa subsp. japonica (Rice).